The sequence spans 272 residues: Deaminated glutathione amidase (272 aa).

Positions M1 to P253 constitute a CN hydrolase domain. Residue E43 is the Proton acceptor of the active site. K115 (proton donor) is an active-site residue. The active-site Nucleophile is the C158.

Belongs to the carbon-nitrogen hydrolase superfamily. NIT1/NIT2 family.

The catalysed reaction is N-(4-oxoglutaryl)-L-cysteinylglycine + H2O = L-cysteinylglycine + 2-oxoglutarate. Hydrolyzes deaminated glutathione (dGSH, 2-oxoglutaramate) to alpha-ketoglutarate (alpha-KG) and cysteinylglycine (specific activity 7.77 umol/min/mg), hydrolyzes alpha-ketoglutaramate (a-KGM, specific activity 2.13 umol/min/mg), has no activity on glutathione or L-glutamine. May function as a metabolite repair enzyme. The protein is Deaminated glutathione amidase of Synechocystis sp. (strain PCC 6803 / GT-S).